A 447-amino-acid polypeptide reads, in one-letter code: MVKKLYIKTNGCQMNEYDSSKMAEVLYASHGLVKTDQVEDADVILLNTCSIREKAQEKVFSQLGQWREYKAKNPHVLIGVGGCVASQEGSDIIKRAPFVDIVFGPQTLHRLPALLNERLEKNKSVVDISFPEIEKFDHLPAPRAEGPTAFVSIMEGCSKYCSFCVVPYTRGEEISRPFDDVLAECYQLASQGVREINLLGQNVNDYRGIMDNGDIADLALLIHYIAAIDGIGRIRFTTSHPLAFSENLINAYAEVPELANHLHLPVQSGSDRILSLMKRGYTALEFKSKIRKLRKIRPDIRLSTDIIVGFPGETDKDFQDTMDLVHEIGFDTSFSFIYSPRPGTPAANLPDDTPMEIKKQRLQILQNRLLMNAARYSESMIGSKQKILVTGFSKKSSQQLSGRTECNRVVNFDGPPHLIGQFIDVQISDALPNSLRGRLLEKEMQPA.

In terms of domain architecture, MTTase N-terminal spans 3 to 120; that stretch reads KKLYIKTNGC…LPALLNERLE (118 aa). [4Fe-4S] cluster-binding residues include C12, C49, C83, C157, C161, and C164. Positions 143–375 constitute a Radical SAM core domain; the sequence is RAEGPTAFVS…QNRLLMNAAR (233 aa). Residues 378–441 form the TRAM domain; that stretch reads ESMIGSKQKI…PNSLRGRLLE (64 aa).

It belongs to the methylthiotransferase family. MiaB subfamily. As to quaternary structure, monomer. The cofactor is [4Fe-4S] cluster.

The protein resides in the cytoplasm. The catalysed reaction is N(6)-dimethylallyladenosine(37) in tRNA + (sulfur carrier)-SH + AH2 + 2 S-adenosyl-L-methionine = 2-methylsulfanyl-N(6)-dimethylallyladenosine(37) in tRNA + (sulfur carrier)-H + 5'-deoxyadenosine + L-methionine + A + S-adenosyl-L-homocysteine + 2 H(+). Its function is as follows. Catalyzes the methylthiolation of N6-(dimethylallyl)adenosine (i(6)A), leading to the formation of 2-methylthio-N6-(dimethylallyl)adenosine (ms(2)i(6)A) at position 37 in tRNAs that read codons beginning with uridine. This Legionella pneumophila (strain Paris) protein is tRNA-2-methylthio-N(6)-dimethylallyladenosine synthase.